Reading from the N-terminus, the 651-residue chain is Probable potassium transport system protein Kup (651 aa).

The next 12 helical transmembrane spans lie at 41-61, 82-102, 130-150, 163-183, 194-214, 235-255, 276-296, 309-329, 366-386, 395-415, 426-446, and 450-470; these read LVLGALGVVYGDIGTSPIYAF, VVSLIFWALTLVVTVKYVLFV, LILGVGICGAALFFGDAVITP, IVAPNLTPFVVPATVVILVTL, VAIVFGPIMALWFVALGASGL, FLTVSPAVAFVTVGAVFLAMT, WLWIVFPCLLLNYFGQAAFIL, MIPSFALWPMVLLATAATVIA, IYIPRVNLLLGLAVVILVLGF, AYGIAVTGNMLVTTVLLYIVM, ALPIILGFLVIDMLFFSANII, and EGGWASIGIATVLVLIMWTWV.

It belongs to the HAK/KUP transporter (TC 2.A.72) family.

It localises to the cell inner membrane. It carries out the reaction K(+)(in) + H(+)(in) = K(+)(out) + H(+)(out). In terms of biological role, transport of potassium into the cell. Likely operates as a K(+):H(+) symporter. The sequence is that of Probable potassium transport system protein Kup from Brucella melitensis biotype 1 (strain ATCC 23456 / CCUG 17765 / NCTC 10094 / 16M).